A 227-amino-acid chain; its full sequence is Peptidyl-tRNA hydrolase (227 aa).

Tyr-14 is a binding site for tRNA. The active-site Proton acceptor is the His-19. The tRNA site is built by Phe-64, Asn-66, and Asn-112. A disordered region spans residues 182–227 (RIALLTQPPKPPKPPKPPKDGAKETAGKGTEAETAKPPGPAAGRTG). A compositionally biased stretch (basic and acidic residues) spans 198 to 215 (PPKDGAKETAGKGTEAET).

The protein belongs to the PTH family. As to quaternary structure, monomer.

The protein resides in the cytoplasm. It carries out the reaction an N-acyl-L-alpha-aminoacyl-tRNA + H2O = an N-acyl-L-amino acid + a tRNA + H(+). Hydrolyzes ribosome-free peptidyl-tRNAs (with 1 or more amino acids incorporated), which drop off the ribosome during protein synthesis, or as a result of ribosome stalling. In terms of biological role, catalyzes the release of premature peptidyl moieties from peptidyl-tRNA molecules trapped in stalled 50S ribosomal subunits, and thus maintains levels of free tRNAs and 50S ribosomes. This chain is Peptidyl-tRNA hydrolase, found in Rhodospirillum centenum (strain ATCC 51521 / SW).